Here is a 1381-residue protein sequence, read N- to C-terminus: Hepatocyte growth factor receptor (1381 aa).

The signal sequence occupies residues 1–24; it reads MKAPTVLTPGILVLLFILVQRSNG. Residues 25 to 932 are Extracellular-facing; that stretch reads ECKEALTKSE…VIVQPDQNFT (908 aa). The region spanning 27–515 is the Sema domain; sequence KEALTKSEMN…TGKKITKIPL (489 aa). Residue Asn45 is glycosylated (N-linked (GlcNAc...) asparagine). Intrachain disulfides connect Cys95–Cys101, Cys98–Cys160, Cys133–Cys141, and Cys172–Cys175. Asn106 carries N-linked (GlcNAc...) asparagine glycosylation. An N-linked (GlcNAc...) asparagine glycan is attached at Asn149. Asn202 carries N-linked (GlcNAc...) asparagine glycosylation. Cystine bridges form between Cys298-Cys363 and Cys385-Cys397. An N-linked (GlcNAc...) asparagine glycan is attached at Asn399. 4 disulfide bridges follow: Cys520-Cys538, Cys526-Cys561, Cys529-Cys545, and Cys541-Cys551. IPT/TIG domains follow at residues 563-655, 657-739, and 742-836; these read PTIY…FSYV, PIIT…FSYR, and PIVY…LIYV. An O-linked (Man) threonine glycan is attached at Thr582. Residues Asn607 and Asn635 are each glycosylated (N-linked (GlcNAc...) asparagine). Thr676 and Thr761 each carry an O-linked (Man) threonine glycan. Asn785, Asn879, and Asn930 each carry an N-linked (GlcNAc...) asparagine glycan. The helical transmembrane segment at 933–955 threads the bilayer; it reads GLIAGVVSISIALLLLLGLFLWL. Topologically, residues 956 to 1381 are cytoplasmic; it reads KKRKQIKDLG…QDNADGEVDT (426 aa). Ser966 carries the post-translational modification Phosphoserine. Thr977 is subject to Phosphothreonine. Residues Ser990, Ser997, and Ser1000 each carry the phosphoserine modification. At Tyr1003 the chain carries Phosphotyrosine. Residues 1078–1345 enclose the Protein kinase domain; it reads VHFNEVIGRG…RISAIFSAFI (268 aa). ATP is bound by residues 1084–1092 and Lys1110; that span reads IGRGHFGCV. The active-site Proton acceptor is Asp1204. The segment at 1212 to 1381 is interaction with RANBP9; sequence LDEKFTVKVA…QDNADGEVDT (170 aa). Residue Tyr1230 is modified to Phosphotyrosine. Residues Tyr1234 and Tyr1235 each carry the phosphotyrosine; by autocatalysis modification. A Phosphothreonine modification is found at Thr1289. The interaction with MUC20 stretch occupies residues 1320–1359; sequence WHPKAEMRPSFSELVSRISAIFSAFIGEHYVHVNATYVNV. A phosphotyrosine; by autocatalysis mark is found at Tyr1349 and Tyr1356. At Tyr1365 the chain carries Phosphotyrosine.

It belongs to the protein kinase superfamily. Tyr protein kinase family. As to quaternary structure, heterodimer made of an alpha chain (50 kDa) and a beta chain (145 kDa) which are disulfide linked. Binds PLXNB1. Interacts when phosphorylated with downstream effectors including STAT3, PIK3R1, SRC, PCLG1, GRB2 and GAB1. Interacts with SPSB1, SPSB2 and SPSB4. Interacts with INPP5D/SHIP1. When phosphorylated at Tyr-1356, interacts with INPPL1/SHIP2. Interacts with RANBP9 and RANBP10, as well as SPSB1, SPSB2, SPSB3 and SPSB4. SPSB1 binding occurs in the presence and in the absence of HGF, however HGF treatment has a positive effect on this interaction. Interacts with MUC20; prevents interaction with GRB2 and suppresses hepatocyte growth factor-induced cell proliferation. Interacts with GRB10. Interacts with PTPN1 and PTPN2. Interacts with tensin TNS3. Interacts (when phosphorylated) with tensin TNS4 (via SH2 domain); the interaction increases MET protein stability by inhibiting MET endocytosis and subsequent lysosomal degradation. Autophosphorylated in response to ligand binding on Tyr-1234 and Tyr-1235 in the kinase domain leading to further phosphorylation of Tyr-1349 and Tyr-1356 in the C-terminal multifunctional docking site. Dephosphorylated by PTPRJ at Tyr-1349 and Tyr-1365. Dephosphorylated by PTPN1 and PTPN2. Post-translationally, ubiquitinated. Ubiquitination by CBL regulates the receptor stability and activity through proteasomal degradation. In terms of processing, O-mannosylation of IPT/TIG domains by TMEM260 is required for protein maturation. O-mannosylated residues are composed of single mannose glycans that are not elongated or modified.

It is found in the membrane. The catalysed reaction is L-tyrosyl-[protein] + ATP = O-phospho-L-tyrosyl-[protein] + ADP + H(+). Its activity is regulated as follows. In its inactive state, the C-terminal tail interacts with the catalytic domain and inhibits the kinase activity. Upon ligand binding, the C-terminal tail is displaced and becomes phosphorylated, thus increasing the kinase activity. Receptor tyrosine kinase that transduces signals from the extracellular matrix into the cytoplasm by binding to hepatocyte growth factor/HGF ligand. Regulates many physiological processes including proliferation, scattering, morphogenesis and survival. Ligand binding at the cell surface induces autophosphorylation of MET on its intracellular domain that provides docking sites for downstream signaling molecules. Following activation by ligand, interacts with the PI3-kinase subunit PIK3R1, PLCG1, SRC, GRB2, STAT3 or the adapter GAB1. Recruitment of these downstream effectors by MET leads to the activation of several signaling cascades including the RAS-ERK, PI3 kinase-AKT, or PLCgamma-PKC. The RAS-ERK activation is associated with the morphogenetic effects while PI3K/AKT coordinates prosurvival effects. During embryonic development, MET signaling plays a role in gastrulation, development and migration of muscles and neuronal precursors, angiogenesis and kidney formation. In adults, participates in wound healing as well as organ regeneration and tissue remodeling. Also promotes differentiation and proliferation of hematopoietic cells. This Ateles geoffroyi (Black-handed spider monkey) protein is Hepatocyte growth factor receptor (MET).